Consider the following 510-residue polypeptide: Flavonoid 3',5'-hydroxylase (510 aa).

Heme is bound at residue Cys-447.

This sequence belongs to the cytochrome P450 family. Requires heme as cofactor.

The enzyme catalyses a 3',5'-unsubstituted flavanone + 2 reduced [NADPH--hemoprotein reductase] + 2 O2 = a 3',5'-dihydroxyflavanone + 2 oxidized [NADPH--hemoprotein reductase] + 2 H2O + 2 H(+). It functions in the pathway pigment biosynthesis; anthocyanin biosynthesis. Catalyzes the 3'5'-hydroxylation of naringenin and eriodictyol to form 5,7,3,'4',5'-pentahydroxyflavanone and 3',5'-hydroxylation of dihydrokaempferol and dihydroquercetin to form dihydromyricetin. This Eustoma exaltatum subsp. russellianum (Bluebells) protein is Flavonoid 3',5'-hydroxylase (CYP75A5).